A 134-amino-acid polypeptide reads, in one-letter code: ATP synthase epsilon chain (134 aa).

The protein belongs to the ATPase epsilon chain family. F-type ATPases have 2 components, CF(1) - the catalytic core - and CF(0) - the membrane proton channel. CF(1) has five subunits: alpha(3), beta(3), gamma(1), delta(1), epsilon(1). CF(0) has three main subunits: a, b and c.

It is found in the cell inner membrane. Its function is as follows. Produces ATP from ADP in the presence of a proton gradient across the membrane. The polypeptide is ATP synthase epsilon chain (Sinorhizobium medicae (strain WSM419) (Ensifer medicae)).